We begin with the raw amino-acid sequence, 418 residues long: Tubulin alpha chain (418 aa).

Residues glutamine 11, glutamate 71, serine 140, glycine 144, threonine 179, asparagine 206, and asparagine 228 each coordinate GTP. Residue glutamate 71 coordinates Mg(2+). Glutamate 255 is a catalytic residue.

This sequence belongs to the tubulin family. Dimer of alpha and beta chains. A typical microtubule is a hollow water-filled tube with an outer diameter of 25 nm and an inner diameter of 15 nM. Alpha-beta heterodimers associate head-to-tail to form protofilaments running lengthwise along the microtubule wall with the beta-tubulin subunit facing the microtubule plus end conferring a structural polarity. Microtubules usually have 13 protofilaments but different protofilament numbers can be found in some organisms and specialized cells. Mg(2+) serves as cofactor.

The protein localises to the cytoplasm. It localises to the cytoskeleton. It carries out the reaction GTP + H2O = GDP + phosphate + H(+). In terms of biological role, tubulin is the major constituent of microtubules, a cylinder consisting of laterally associated linear protofilaments composed of alpha- and beta-tubulin heterodimers. Microtubules grow by the addition of GTP-tubulin dimers to the microtubule end, where a stabilizing cap forms. Below the cap, tubulin dimers are in GDP-bound state, owing to GTPase activity of alpha-tubulin. The protein is Tubulin alpha chain (TUB1) of Ajellomyces capsulatus (Darling's disease fungus).